Consider the following 392-residue polypeptide: GTPase Obg (392 aa).

In terms of domain architecture, Obg spans 1 to 159; the sequence is MKFVDEATIL…RDLQLELMLL (159 aa). The disordered stretch occupies residues 127–148; sequence NSRFKSSVNRSPRQKTMGTPGD. Polar residues predominate over residues 129-143; that stretch reads RFKSSVNRSPRQKTM. One can recognise an OBG-type G domain in the interval 160–333; sequence ADVGMLGMPN…LCWDVMAFII (174 aa). Residues 166-173, 191-195, 213-216, 283-286, and 314-316 each bind GTP; these read GMPNAGKS, FTTLV, DIPG, NKID, and SAA. The Mg(2+) site is built by S173 and T193. Positions 363–386 are enriched in acidic residues; it reads EQEVEVEDDEEWDEDWDEDDEEGV. Residues 363 to 392 are disordered; sequence EQEVEVEDDEEWDEDWDEDDEEGVEFIYKR.

Belongs to the TRAFAC class OBG-HflX-like GTPase superfamily. OBG GTPase family. As to quaternary structure, monomer. The cofactor is Mg(2+).

The protein resides in the cytoplasm. In terms of biological role, an essential GTPase which binds GTP, GDP and possibly (p)ppGpp with moderate affinity, with high nucleotide exchange rates and a fairly low GTP hydrolysis rate. Plays a role in control of the cell cycle, stress response, ribosome biogenesis and in those bacteria that undergo differentiation, in morphogenesis control. This Enterobacter sp. (strain 638) protein is GTPase Obg.